A 160-amino-acid chain; its full sequence is MTRGLVFFVSTACGILADQLSKFIITANLATGTSIPESGFFQIVHVHNTGAAFSIFRGHIEWLIAASVLGVILAMTAFFIRKKLPFLDTRPGLIALGVILAGTVGNLIDRVRLGYVTDFIRVGDFPTFNIADSCLTVGVIGLLLLYIVSSHVSGDTSENV.

Helical transmembrane passes span 60–80 (IEWL…AFFI) and 84–104 (LPFL…AGTV). Active-site residues include aspartate 118 and aspartate 132. Residues 128–148 (FNIADSCLTVGVIGLLLLYIV) traverse the membrane as a helical segment.

This sequence belongs to the peptidase A8 family.

Its subcellular location is the cell membrane. The catalysed reaction is Release of signal peptides from bacterial membrane prolipoproteins. Hydrolyzes -Xaa-Yaa-Zaa-|-(S,diacylglyceryl)Cys-, in which Xaa is hydrophobic (preferably Leu), and Yaa (Ala or Ser) and Zaa (Gly or Ala) have small, neutral side chains.. The protein operates within protein modification; lipoprotein biosynthesis (signal peptide cleavage). In terms of biological role, this protein specifically catalyzes the removal of signal peptides from prolipoproteins. The sequence is that of Lipoprotein signal peptidase from Dehalococcoides mccartyi (strain CBDB1).